The primary structure comprises 259 residues: tRNA pseudouridine synthase A (259 aa).

The active-site Nucleophile is the Asp-52. Residue Tyr-113 participates in substrate binding.

Belongs to the tRNA pseudouridine synthase TruA family. Homodimer.

It carries out the reaction uridine(38/39/40) in tRNA = pseudouridine(38/39/40) in tRNA. Functionally, formation of pseudouridine at positions 38, 39 and 40 in the anticodon stem and loop of transfer RNAs. This is tRNA pseudouridine synthase A from Allorhizobium ampelinum (strain ATCC BAA-846 / DSM 112012 / S4) (Agrobacterium vitis (strain S4)).